Here is a 964-residue protein sequence, read N- to C-terminus: Chromatin assembly factor 1 subunit A (964 aa).

Residues 1–49 (MLEEPECGAPGARGEAAAMDCKDRPAFPVKKLIQARLPFKRLNLVPKEK) are binds to PCNA. The segment at 1 to 316 (MLEEPECGAP…LHTGPSPFPA (316 aa)) is binds to CBX1 chromo shadow domain. Phosphoserine is present on residues Ser-126, Ser-141, and Ser-144. The interval 146–232 (AQKNINGVPD…KDRDGWSEAG (87 aa)) is disordered. Over residues 156–172 (KAGDDRGLPKARQKDEL) the composition is skewed to basic and acidic residues. Lys-185 participates in a covalent cross-link: Glycyl lysine isopeptide (Lys-Gly) (interchain with G-Cter in SUMO1); alternate. Residue Lys-185 forms a Glycyl lysine isopeptide (Lys-Gly) (interchain with G-Cter in SUMO2); alternate linkage. Residues 236–249 (FKGKMPVVVLQDIL) carry the PxVxL motif motif. Disordered regions lie at residues 253 to 437 (PPAR…REEE) and 601 to 641 (DSDE…VPHG). The span at 284 to 298 (LSHSSLSSSSPTSSP) shows a compositional bias: low complexity. A Phosphoserine modification is found at Ser-312. Residues 329–453 (RGSAEKNKMK…KAEITRFFQK (125 aa)) are a coiled coil. The span at 331-437 (SAEKNKMKLQ…EEEKRLREEE (107 aa)) shows a compositional bias: basic and acidic residues. Acidic residues-rich tracts occupy residues 601 to 612 (DSDEEWEEEEPG) and 620 to 635 (GDDD…EDDG). The necessary for homodimerization and competence for chromatin assembly stretch occupies residues 644–680 (SEDEGVTEECADPENHKVRQKLKAKEWDEFLAKGKRF). The interval 662-964 (RQKLKAKEWD…FVSPSSLRLS (303 aa)) is binds to p60. At Thr-723 the chain carries Phosphothreonine. A disordered region spans residues 769 to 799 (RDAGSPEDSAASPPSPGPARPQTPTASEDVA). A compositionally biased stretch (low complexity) spans 770–780 (DAGSPEDSAAS). Phosphoserine occurs at positions 773, 783, 811, 876, and 881. Positions 859 to 878 (EDSGSVPAPGPGQGMPVSLK) are disordered. Disordered regions lie at residues 897–920 (DGQV…DDEG) and 933–964 (IQAP…LRLS). The segment covering 904–920 (DLDDFQADTEEEDDDEG) has biased composition (acidic residues). The segment covering 949-964 (MDTSESFVSPSSLRLS) has biased composition (polar residues). Position 959 is a phosphoserine (Ser-959).

It belongs to the CHAF1A family. As to quaternary structure, homodimer. Part of the CAF-1 complex that contains RBBP4, CHAF1B and CHAF1A. CHAF1A binds directly to CHAF1B. Only minor amounts of RBBP4 are complexed with CHAF1A and CHAF1B in G1 phase. Interacts with PCNA; the interaction is direct. Interacts (via the PxVxL motif) with CBX5; the interaction is direct. Interacts with MBD1. Interacts with histones H3.1, H3.2 and H3.1t.

The protein localises to the nucleus. Functionally, acts as a component of the histone chaperone complex chromatin assembly factor 1 (CAF-1), which assembles histone octamers onto DNA during replication and repair. CAF-1 performs the first step of the nucleosome assembly process, bringing newly synthesized histones H3 and H4 to replicating DNA; histones H2A/H2B can bind to this chromatin precursor subsequent to DNA replication to complete the histone octamer. It may play a role in heterochromatin maintenance in proliferating cells by bringing newly synthesized cbx proteins to heterochromatic DNA replication foci. The chain is Chromatin assembly factor 1 subunit A (CHAF1A) from Bos taurus (Bovine).